Reading from the N-terminus, the 84-residue chain is MAITKKCFAAFVLILLFVMPFVYCSELDNTSGFEIKQEDKCYGPEPCKNGYEGCLFFCVRIAYYLYGECTMKPDHQKHCCCVTK.

An N-terminal signal peptide occupies residues 1–24 (MAITKKCFAAFVLILLFVMPFVYC). Disulfide bonds link Cys-41–Cys-81, Cys-47–Cys-69, Cys-54–Cys-79, and Cys-58–Cys-80.

The protein belongs to the DEFL family.

It localises to the secreted. In Arabidopsis thaliana (Mouse-ear cress), this protein is Putative defensin-like protein 114.